We begin with the raw amino-acid sequence, 578 residues long: Probable arginine--tRNA ligase, mitochondrial (578 aa).

A mitochondrion-targeting transit peptide spans 1 to 16; that stretch reads MACGFRRAIACQLSRV. L-arginine-binding positions include 133 to 135, H144, Y322, D326, and Q350; that span reads SPN. The 'HIGH' region signature appears at 133-144; it reads SPNVAKKFHVGH. K568 carries the post-translational modification N6-acetyllysine.

It belongs to the class-I aminoacyl-tRNA synthetase family.

The protein localises to the mitochondrion membrane. It carries out the reaction tRNA(Arg) + L-arginine + ATP = L-arginyl-tRNA(Arg) + AMP + diphosphate. Its function is as follows. Catalyzes the attachment of arginine to tRNA(Arg) in a two-step reaction: arginine is first activated by ATP to form Arg-AMP and then transferred to the acceptor end of tRNA(Arg). This chain is Probable arginine--tRNA ligase, mitochondrial (RARS2), found in Pongo abelii (Sumatran orangutan).